A 39-amino-acid chain; its full sequence is MAAGAVFLALSAQLLQARLMKEESPVVSWWLEPEDGTAL.

Residues 1-17 (MAAGAVFLALSAQLLQA) form the signal peptide.

It belongs to the BAGE family. Not expressed in normal tissues except in testis. Expressed in melanoma, bladder and lung carcinomas.

The protein localises to the secreted. Functionally, unknown. Candidate gene encoding tumor antigens. In Homo sapiens (Human), this protein is B melanoma antigen 4 (BAGE4).